A 246-amino-acid polypeptide reads, in one-letter code: Bacteriorhodopsin-II-like protein (246 aa).

The next 7 membrane-spanning stretches (helical) occupy residues 7-27, 45-65, 82-102, 107-127, 135-155, 182-202, and 205-225; these read EATWLWIGTIGMVLGTVYFAV, TLIPAIAAAAYLAMATGLGVI, YADWLLTTPLLIIDLALVAGA, LYKLIIIDAIMILGGLAGSMM, IVWWAVSTAAFIILLYYLLGE, WALYPIVWILGTGGGFGIIAV, and EIMLYVMLDIGTKIGFGAVLL. Residue Lys217 is modified to N6-(retinylidene)lysine.

This sequence belongs to the archaeal/bacterial/fungal opsin family. In terms of processing, the covalent binding of retinal to the apoprotein, bacterioopsin, generates bacteriorhodopsin.

It localises to the cell membrane. In terms of biological role, has no proton-pumping activity but is potentially capable of functioning as a sensory SRII-like protein. The chromophore contains 36.5% all-trans-, 7.6% 11-cis- and 56.4% 13-cis-retinal in the dark and 30.1% 11-cis- and 47.7% 13-cis-retinal upon illumination with &gt;460 nm light. The polypeptide is Bacteriorhodopsin-II-like protein (bop2) (Haloquadratum walsbyi (strain DSM 16790 / HBSQ001)).